The following is a 705-amino-acid chain: Elongation factor G (705 aa).

Positions 8 to 294 (ELYRNFGIMA…SVIDYLPSPL (287 aa)) constitute a tr-type G domain. GTP is bound by residues 17-24 (AHIDAGKT), 92-96 (DTPGH), and 146-149 (NKMD).

The protein belongs to the TRAFAC class translation factor GTPase superfamily. Classic translation factor GTPase family. EF-G/EF-2 subfamily.

It is found in the cytoplasm. Its function is as follows. Catalyzes the GTP-dependent ribosomal translocation step during translation elongation. During this step, the ribosome changes from the pre-translocational (PRE) to the post-translocational (POST) state as the newly formed A-site-bound peptidyl-tRNA and P-site-bound deacylated tRNA move to the P and E sites, respectively. Catalyzes the coordinated movement of the two tRNA molecules, the mRNA and conformational changes in the ribosome. This Cereibacter sphaeroides (strain KD131 / KCTC 12085) (Rhodobacter sphaeroides) protein is Elongation factor G.